Consider the following 475-residue polypeptide: Bifunctional protein HldE (475 aa).

A ribokinase region spans residues 1-321 (MADKIDISLY…RALHQITASH (321 aa)). Residue 197-200 (NLKE) participates in ATP binding. Residue D266 is part of the active site. The segment at 346–475 (MTNGCFDILH…TSRLVEKMLN (130 aa)) is cytidylyltransferase.

This sequence in the N-terminal section; belongs to the carbohydrate kinase PfkB family. The protein in the C-terminal section; belongs to the cytidylyltransferase family. As to quaternary structure, homodimer.

The enzyme catalyses D-glycero-beta-D-manno-heptose 7-phosphate + ATP = D-glycero-beta-D-manno-heptose 1,7-bisphosphate + ADP + H(+). It catalyses the reaction D-glycero-beta-D-manno-heptose 1-phosphate + ATP + H(+) = ADP-D-glycero-beta-D-manno-heptose + diphosphate. The protein operates within nucleotide-sugar biosynthesis; ADP-L-glycero-beta-D-manno-heptose biosynthesis; ADP-L-glycero-beta-D-manno-heptose from D-glycero-beta-D-manno-heptose 7-phosphate: step 1/4. Its pathway is nucleotide-sugar biosynthesis; ADP-L-glycero-beta-D-manno-heptose biosynthesis; ADP-L-glycero-beta-D-manno-heptose from D-glycero-beta-D-manno-heptose 7-phosphate: step 3/4. Functionally, catalyzes the phosphorylation of D-glycero-D-manno-heptose 7-phosphate at the C-1 position to selectively form D-glycero-beta-D-manno-heptose-1,7-bisphosphate. Its function is as follows. Catalyzes the ADP transfer from ATP to D-glycero-beta-D-manno-heptose 1-phosphate, yielding ADP-D-glycero-beta-D-manno-heptose. This Coxiella burnetii (strain RSA 331 / Henzerling II) protein is Bifunctional protein HldE.